The primary structure comprises 598 residues: Nitrate/nitrite sensor protein NarX (598 aa).

Residues M1 to Q14 are Cytoplasmic-facing. The helical transmembrane segment at V15 to V37 threads the bilayer. Topologically, residues Q38–T151 are periplasmic. The helical transmembrane segment at V152–L174 threads the bilayer. Residues R175 to E598 are Cytoplasmic-facing. Positions A176–A228 constitute an HAMP domain. In terms of domain architecture, Histidine kinase spans T393–K587. The residue at position 399 (H399) is a Phosphohistidine; by autocatalysis.

It localises to the cell inner membrane. The enzyme catalyses ATP + protein L-histidine = ADP + protein N-phospho-L-histidine.. Functionally, acts as a sensor for nitrate/nitrite and transduces signal of nitrate availability to the NarL protein and of both nitrate/nitrite to the NarP protein. NarX probably activates NarL and NarP by phosphorylation in the presence of nitrate. NarX also plays a negative role in controlling NarL activity, probably through dephosphorylation in the absence of nitrate. The protein is Nitrate/nitrite sensor protein NarX (narX) of Escherichia coli O157:H7.